Consider the following 449-residue polypeptide: Phosphoglucosamine mutase (449 aa).

The Phosphoserine intermediate role is filled by S100. Mg(2+) contacts are provided by S100, D241, D243, and D245. At S100 the chain carries Phosphoserine.

It belongs to the phosphohexose mutase family. Requires Mg(2+) as cofactor. In terms of processing, activated by phosphorylation.

The catalysed reaction is alpha-D-glucosamine 1-phosphate = D-glucosamine 6-phosphate. Its function is as follows. Catalyzes the conversion of glucosamine-6-phosphate to glucosamine-1-phosphate. The polypeptide is Phosphoglucosamine mutase (Clostridium botulinum (strain ATCC 19397 / Type A)).